The following is a 140-amino-acid chain: Nucleoside diphosphate kinase (140 aa).

6 residues coordinate ATP: lysine 11, phenylalanine 59, arginine 87, threonine 93, arginine 104, and asparagine 114. The active-site Pros-phosphohistidine intermediate is histidine 117.

This sequence belongs to the NDK family. As to quaternary structure, homotetramer. The cofactor is Mg(2+).

It localises to the cytoplasm. It carries out the reaction a 2'-deoxyribonucleoside 5'-diphosphate + ATP = a 2'-deoxyribonucleoside 5'-triphosphate + ADP. It catalyses the reaction a ribonucleoside 5'-diphosphate + ATP = a ribonucleoside 5'-triphosphate + ADP. Major role in the synthesis of nucleoside triphosphates other than ATP. The ATP gamma phosphate is transferred to the NDP beta phosphate via a ping-pong mechanism, using a phosphorylated active-site intermediate. In Granulibacter bethesdensis (strain ATCC BAA-1260 / CGDNIH1), this protein is Nucleoside diphosphate kinase.